A 64-amino-acid chain; its full sequence is Large ribosomal subunit protein bL35 (64 aa).

Residues 1 to 26 (MPKMKTKSAAAKRFKTTKSGKIKRKQ) show a composition bias toward basic residues. Positions 1-46 (MPKMKTKSAAAKRFKTTKSGKIKRKQAYTSHLAPNKTTKQKRHLRK) are disordered.

It belongs to the bacterial ribosomal protein bL35 family.

The protein is Large ribosomal subunit protein bL35 of Mycoplasmoides gallisepticum (strain R(low / passage 15 / clone 2)) (Mycoplasma gallisepticum).